The chain runs to 123 residues: Ribonuclease P protein component (123 aa).

Belongs to the RnpA family. As to quaternary structure, consists of a catalytic RNA component (M1 or rnpB) and a protein subunit.

It catalyses the reaction Endonucleolytic cleavage of RNA, removing 5'-extranucleotides from tRNA precursor.. In terms of biological role, RNaseP catalyzes the removal of the 5'-leader sequence from pre-tRNA to produce the mature 5'-terminus. It can also cleave other RNA substrates such as 4.5S RNA. The protein component plays an auxiliary but essential role in vivo by binding to the 5'-leader sequence and broadening the substrate specificity of the ribozyme. This Streptococcus pneumoniae (strain Hungary19A-6) protein is Ribonuclease P protein component.